Reading from the N-terminus, the 419-residue chain is MSENSSTDMYLFKKSLKELKGKRGKGTELISVYVPAGRRLSDISQHLRQELSQSSNIKSKTTMKNVQSAIEVILQRLKLLKEPLEKGVIIFAGMIPRGGPGTEKMEVYVLEPPEPVKTFIYRCDSEFYTESLEDFIQDTEVYGVILVDRNEATIGTVKGKTITVLKKLTSGVPGKFKAGGQSARRLERLIDDAAHQFMVRIGEYSTESFMPILEEKKLRGLLIGGPGNTKNEFAEKDFLHHELKKKIIDTFDLCYTEEFGIRELLEKASDLLRDLDLMKEKNLIQKFFKELIKDDGGLSAYGESQVMRYLEMGAIDTLIVTEDIELTRVTIKCNNCNFKQEINVKTRDLYKFEDEVKTKICKQCSGSMYIEEEKDIIEYLSELCNIHNSDIVVVSTDTEEGSQISKAFKGMAAILRYKI.

It belongs to the eukaryotic release factor 1 family. As to quaternary structure, heterodimer of two subunits, one of which binds GTP.

The protein localises to the cytoplasm. Directs the termination of nascent peptide synthesis (translation) in response to the termination codons UAA, UAG and UGA. The chain is Peptide chain release factor subunit 1 from Methanococcus vannielii (strain ATCC 35089 / DSM 1224 / JCM 13029 / OCM 148 / SB).